The chain runs to 526 residues: MGKKSLAEQIADIANKPQVEDFDIENDEGVFQHGGSDSDVSSGDESEEELKKQHYVAVGKSKLRNVVDQGLAVKDKKYVGSKGSRAELFNDEEMDAPEQGESESEAESGSEESDAVSFRSDSEDVSESEATSESEIEKDREEDEETAMKKEKLAKIVQTQTKQVINNLAHSAQRDASKGYAILQQNKFFDKILDSRIKLQKALSASNQLPLSQQSWDELLDENNSKLLTSTFKVLEKVLTQCVTVRHKFQIGDHINQSENPSDFDNSKKRSFKELVHETVTLDSDLKSYRSAVLNKWSAKVSASSGKSLLQASKFKAINQSADVQVDNQLADMPRLLKRTKLNRSNTKPLLFDEDLQKGLLKELQLEENVEGDIEEENNLDIPKNYDPRRKDNNALDFTQNPYIYDDEDFYRVLLNDLVEKKISNSQQSNGVTLAITSRSENKLKKNIDTKASKGRKLNYSIQEPIANYEASVNTGYKWSDEQIDEFFAGLLGQKINFNEDDELEADTMHNEEDEEIKNDDIQIFG.

2 disordered regions span residues 16 to 53 (KPQVEDFDIENDEGVFQHGGSDSDVSSGDESEEELKKQ) and 82 to 149 (KGSR…TAMK). Composition is skewed to acidic residues over residues 89–114 (FNDEEMDAPEQGESESEAESGSEESD) and 123–145 (EDVSESEATSESEIEKDREEDEE).

This sequence belongs to the AATF family.

It is found in the nucleus. The protein resides in the nucleolus. This chain is Protein BFR2 (BFR2), found in Kluyveromyces lactis (strain ATCC 8585 / CBS 2359 / DSM 70799 / NBRC 1267 / NRRL Y-1140 / WM37) (Yeast).